Consider the following 475-residue polypeptide: Terminase, large subunit (475 aa).

The interval 1–58 (MELDAILDNLSDEEQIELLELLEEEENYRNTHLLYEFTPYSKQREFIDAGHDYQSDVL) is interaction with the terminase small subunit. An ATPase activity region spans residues 1 to 282 (MELDAILDNL…EHEREARARG (282 aa)). Positions 308–475 (DHFYVIDAQD…MRLRQDDARY (168 aa)) are nuclease activity. Positions 317 and 455 each coordinate Mg(2+).

It belongs to the Lederbergvirus large terminase family. In terms of assembly, interacts with the terminase small subunit; the active complex is composed of dimer of terminase large subunits and a nonamer ring of terminase small subunits. Interacts with the portal protein; this interaction allows the packaging of viral DNA. The cofactor is Mg(2+).

Its function is as follows. The terminase large subunit acts as an ATP driven molecular motor necessary for viral DNA translocation into empty capsids and as an endonuclease that cuts the viral genome to initiate and to end a packaging reaction. The terminase lies at a unique vertex of the procapsid and is composed of two subunits, a small terminase subunit involved in viral DNA recognition (packaging 'pac' sequence), and a large terminase subunit possessing endonucleolytic and ATPase activities. Both terminase subunits heterooligomerize and are docked on the portal protein to form the packaging machine. The terminase large subunit exhibits endonuclease activity and cleaves the viral genome concatemer once the capsid is full (headful packaging). Once the capsid is packaged with the DNA, the terminase complex is substituted by the tail. This chain is Terminase, large subunit (2), found in Salmonella (Bacteriophage LP7).